The chain runs to 755 residues: Primary amine oxidase (755 aa).

The N-terminal stretch at 1–30 (MANGLKFSPRKTALALAVAVVCAWQSPVFA) is a signal peptide. Substrate is bound by residues 411 to 422 (YLDSGDYGMGTL) and 493 to 498 (VGNYDY). Catalysis depends on D413, which acts as the Proton acceptor. The active-site Schiff-base intermediate with substrate; via topaquinone is the Y496. Y496 carries the 2',4',5'-topaquinone modification. H554 and H556 together coordinate Cu cation. D563, L564, D565, E603, Y697, D700, E702, and D708 together coordinate Ca(2+). D563 is a Mn(2+) binding site. Position 565 (D565) interacts with Mn(2+). D708 serves as a coordination point for Mn(2+). H719 is a Cu cation binding site.

It belongs to the copper/topaquinone oxidase family. As to quaternary structure, homodimer. The cofactor is Cu cation. Zn(2+) serves as cofactor. It depends on Ca(2+) as a cofactor. Requires L-topaquinone as cofactor. Mn(2+) is required as a cofactor. In terms of processing, topaquinone (TPQ) is generated by copper-dependent autoxidation of a specific tyrosyl residue.

The protein localises to the periplasm. The enzyme catalyses a primary methyl amine + O2 + H2O = an aldehyde + H2O2 + NH4(+). Functionally, active on tyramine, tryptamine, beta-phenethylamine and dopamine. The protein is Primary amine oxidase (maoA) of Klebsiella aerogenes (Enterobacter aerogenes).